The primary structure comprises 301 residues: Cytochrome c biogenesis protein CcsA (301 aa).

The next 8 membrane-spanning stretches (helical) occupy residues asparagine 13–phenylalanine 33, valine 39–glycine 59, leucine 73–tyrosine 93, leucine 97–leucine 117, methionine 146–isoleucine 166, threonine 209–asparagine 229, tryptophan 236–leucine 256, and alanine 270–leucine 290.

This sequence belongs to the CcmF/CycK/Ccl1/NrfE/CcsA family. May interact with Ccs1.

The protein resides in the plastid. It is found in the chloroplast thylakoid membrane. Functionally, required during biogenesis of c-type cytochromes (cytochrome c6 and cytochrome f) at the step of heme attachment. The sequence is that of Cytochrome c biogenesis protein CcsA from Guillardia theta (Cryptophyte).